A 322-amino-acid chain; its full sequence is UV DNA damage endonuclease (322 aa).

It belongs to the uve1/UvsE family.

Component in a DNA repair pathway. Removal of UV LIGHT damaged nucleotides. Recognizes pyrimidine dimers and cleave a phosphodiester bond immediately 5' to the lesion. In Halalkalibacterium halodurans (strain ATCC BAA-125 / DSM 18197 / FERM 7344 / JCM 9153 / C-125) (Bacillus halodurans), this protein is UV DNA damage endonuclease.